Consider the following 265-residue polypeptide: Glycosylphosphatidylinositol anchor biosynthesis protein 11 (265 aa).

The next 2 helical transmembrane spans lie at 49–69 and 79–99; these read LLVV…SGLT and GFLT…INLL. N-linked (GlcNAc...) asparagine glycosylation is found at N111 and N112. 4 helical membrane passes run 137–157, 166–186, 209–229, and 240–260; these read IFVS…MGAP, LYLS…LSNL, ILSS…PIPL, and ITLL…SLIV.

Belongs to the PIGF family.

The protein localises to the endoplasmic reticulum membrane. The protein operates within glycolipid biosynthesis; glycosylphosphatidylinositol-anchor biosynthesis. Functionally, acts in the GPI biosynthetic pathway between GlcNAc-PI synthesis and GPI transfer to protein. In Candida albicans (strain SC5314 / ATCC MYA-2876) (Yeast), this protein is Glycosylphosphatidylinositol anchor biosynthesis protein 11 (GPI11).